We begin with the raw amino-acid sequence, 348 residues long: Phosphoribosylformylglycinamidine cyclo-ligase (348 aa).

Belongs to the AIR synthase family.

Its subcellular location is the cytoplasm. It catalyses the reaction 2-formamido-N(1)-(5-O-phospho-beta-D-ribosyl)acetamidine + ATP = 5-amino-1-(5-phospho-beta-D-ribosyl)imidazole + ADP + phosphate + H(+). It participates in purine metabolism; IMP biosynthesis via de novo pathway; 5-amino-1-(5-phospho-D-ribosyl)imidazole from N(2)-formyl-N(1)-(5-phospho-D-ribosyl)glycinamide: step 2/2. The protein is Phosphoribosylformylglycinamidine cyclo-ligase of Aromatoleum aromaticum (strain DSM 19018 / LMG 30748 / EbN1) (Azoarcus sp. (strain EbN1)).